The following is a 175-amino-acid chain: Putative metal-dependent hydrolase BPUM_0784 (175 aa).

The Zn(2+) site is built by His65, His157, and His161.

The protein belongs to the metal hydrolase YfiT family. In terms of assembly, homodimer. Zn(2+) is required as a cofactor.

It is found in the cytoplasm. In terms of biological role, possible metal-dependent hydrolase. The polypeptide is Putative metal-dependent hydrolase BPUM_0784 (Bacillus pumilus (strain SAFR-032)).